Reading from the N-terminus, the 931-residue chain is Netrin receptor UNC5C (931 aa).

The signal sequence occupies residues 1 to 40 (MRKGLRATAARCGLGLGYLLQMLVLPALALLSASGTGSAA). The Extracellular portion of the chain corresponds to 41-380 (QDDEFFHELP…APDSDDVALY (340 aa)). The 98-residue stretch at 62-159 (PHFLIEPEEA…AGTTKSRKAY (98 aa)) folds into the Ig-like domain. Disulfide bonds link Cys83–Cys144, Cys95–Cys142, Cys188–Cys239, Cys272–Cys309, Cys276–Cys313, Cys287–Cys299, Cys328–Cys362, Cys332–Cys367, and Cys340–Cys352. One can recognise an Ig-like C2-type domain in the interval 161-256 (RIAYLRKTFE…KRKSTTATVI (96 aa)). Residue Asn236 is glycosylated (N-linked (GlcNAc...) asparagine). 2 consecutive TSP type-1 domains span residues 260–314 (NGGW…TLCP) and 316–368 (DGRW…GLCM). Residue Asn361 is glycosylated (N-linked (GlcNAc...) asparagine). The helical transmembrane segment at 381 to 401 (VGIVIAVTVCLAITVVVALFV) threads the bilayer. Residues 402-931 (YRKNHRDFES…VVSLAAEGQY (530 aa)) lie on the Cytoplasmic side of the membrane. The required for netrin-mediated axon repulsion of neuronal growth cones stretch occupies residues 402–931 (YRKNHRDFES…VVSLAAEGQY (530 aa)). Ser502 bears the Phosphoserine mark. The ZU5 domain occupies 530 to 673 (CTAFGTFNSL…LSTYALVGQS (144 aa)). At Tyr568 the chain carries Phosphotyrosine. Residues 694–712 (SLEYSIRVYCLDDTQDALK) are interaction with DCC. Residues 850–929 (QKLCSSLDAP…ETVVSLAAEG (80 aa)) form the Death domain.

Belongs to the unc-5 family. Interacts with DCC (via cytoplasmic domain). Interacts (tyrosine phosphorylated form) with PTPN11. Interacts (via extracellular domain) with FLRT3 (via extracellular domain). Interacts (via Ig-like C2-type domain) with DSCAM (via extracellular domain). Interacts (via death domain) with DAPK1. Interacts (via cytoplasmic domain) with TUBB3; this interaction is decreased by NTN1/Netrin-1. In terms of processing, phosphorylated on different cytoplasmic tyrosine residues. Phosphorylation of Tyr-568 leads to an interaction with PTPN11 phosphatase, suggesting that its activity is regulated by phosphorylation/dephosphorylation. Tyrosine phosphorylation is netrin-dependent. Proteolytically cleaved by caspases during apoptosis. The cleavage does not take place when the receptor is associated with netrin ligand. Its cleavage by caspases is required to induce apoptosis. In terms of tissue distribution, expressed in cortical and cerebellar neurons, including cells of the external and internal granular layer and of the Purkinje cell layer (at protein level). Mainly expressed in regions of differentiating neurons. Highly expressed in brain and lung. Expressed in the cerebellum and the neurons of the hippocampus, with enrichment in neurons of the CA3 hippocampal pyramidal layer. Weakly expressed in testis, ovary, spleen, thymus and bladder. Expressed at very low level in kidney, intestine and salivary gland.

The protein localises to the cell membrane. It is found in the cell surface. Its subcellular location is the synapse. It localises to the synaptosome. The protein resides in the cell projection. The protein localises to the dendrite. It is found in the axon. Its subcellular location is the growth cone. It localises to the lamellipodium. The protein resides in the filopodium. Functionally, receptor for netrin required for axon guidance. Mediates axon repulsion of neuronal growth cones in the developing nervous system upon ligand binding. NTN1/Netrin-1 binding might cause dissociation of UNC5C from polymerized TUBB3 in microtubules and thereby lead to increased microtubule dynamics and axon repulsion. Axon repulsion in growth cones may also be caused by its association with DCC that may trigger signaling for repulsion. Might also collaborate with DSCAM in NTN1-mediated axon repulsion independently of DCC. Also involved in corticospinal tract axon guidance independently of DCC. Involved in dorsal root ganglion axon projection towards the spinal cord. It also acts as a dependence receptor required for apoptosis induction when not associated with netrin ligand. The chain is Netrin receptor UNC5C (Unc5c) from Mus musculus (Mouse).